A 156-amino-acid chain; its full sequence is Protein-export protein SecB (156 aa).

This sequence belongs to the SecB family. As to quaternary structure, homotetramer, a dimer of dimers. One homotetramer interacts with 1 SecA dimer.

The protein resides in the cytoplasm. Its function is as follows. One of the proteins required for the normal export of preproteins out of the cell cytoplasm. It is a molecular chaperone that binds to a subset of precursor proteins, maintaining them in a translocation-competent state. It also specifically binds to its receptor SecA. The sequence is that of Protein-export protein SecB from Desulfotalea psychrophila (strain LSv54 / DSM 12343).